Consider the following 135-residue polypeptide: Large ribosomal subunit protein bL21 (135 aa).

Residues 109–128 are compositionally biased toward polar residues; it reads TLATAQSAPPSTSEATTDTT. Positions 109-135 are disordered; it reads TLATAQSAPPSTSEATTDTTGIPAAEE.

The protein belongs to the bacterial ribosomal protein bL21 family. In terms of assembly, part of the 50S ribosomal subunit. Contacts protein L20.

Functionally, this protein binds to 23S rRNA in the presence of protein L20. The chain is Large ribosomal subunit protein bL21 from Synechococcus sp. (strain JA-3-3Ab) (Cyanobacteria bacterium Yellowstone A-Prime).